We begin with the raw amino-acid sequence, 403 residues long: Phosphoglycerate kinase (403 aa).

Substrate is bound by residues Asp-21–Asn-23, Arg-36, His-59–Arg-62, Arg-118, and Arg-151. ATP-binding positions include Lys-202, Glu-328, and Gly-354 to Ser-357.

The protein belongs to the phosphoglycerate kinase family. As to quaternary structure, monomer.

The protein resides in the cytoplasm. The catalysed reaction is (2R)-3-phosphoglycerate + ATP = (2R)-3-phospho-glyceroyl phosphate + ADP. Its pathway is carbohydrate degradation; glycolysis; pyruvate from D-glyceraldehyde 3-phosphate: step 2/5. The chain is Phosphoglycerate kinase from Akkermansia muciniphila (strain ATCC BAA-835 / DSM 22959 / JCM 33894 / BCRC 81048 / CCUG 64013 / CIP 107961 / Muc).